The following is a 332-amino-acid chain: 2,3-diketo-L-gulonate reductase (332 aa).

His44 serves as the catalytic Proton donor. Residues 168–174, 224–225, and 304–306 each bind NAD(+); these read ITMVDMS, WK, and GHE.

Belongs to the LDH2/MDH2 oxidoreductase family. DlgD subfamily. As to quaternary structure, homodimer.

Its subcellular location is the cytoplasm. It carries out the reaction 3-dehydro-L-gulonate + NAD(+) = 2,3-dioxo-L-gulonate + NADH + H(+). The catalysed reaction is 3-dehydro-L-gulonate + NADP(+) = 2,3-dioxo-L-gulonate + NADPH + H(+). Catalyzes the reduction of 2,3-diketo-L-gulonate in the presence of NADH, to form 3-keto-L-gulonate. This Salmonella typhimurium (strain LT2 / SGSC1412 / ATCC 700720) protein is 2,3-diketo-L-gulonate reductase.